We begin with the raw amino-acid sequence, 217 residues long: Oxygen regulatory protein NreC (217 aa).

A Response regulatory domain is found at 2–119 (KIVIADDHAV…QLISAVRTVY (118 aa)). At D53 the chain carries 4-aspartylphosphate. Positions 148–213 (TNDPFRILSK…ELVEYALKKK (66 aa)) constitute an HTH luxR-type domain. A DNA-binding region (H-T-H motif) is located at residues 172–191 (NKEIAEKLFVSVKTVEAHKT).

Post-translationally, phosphorylated by NreB.

The protein localises to the cytoplasm. Member of the two-component regulatory system NreB/NreC involved in the control of dissimilatory nitrate/nitrite reduction in response to oxygen. Phosphorylated NreC binds to a GC-rich palindromic sequence at the promoters of the nitrate (narGHJI) and nitrite (nir) reductase operons, as well as the putative nitrate transporter gene narT, and activates their expression. The sequence is that of Oxygen regulatory protein NreC (nreC) from Staphylococcus carnosus (strain TM300).